We begin with the raw amino-acid sequence, 187 residues long: Lysozyme 3 (187 aa).

Positions 1–18 are cleaved as a signal peptide; that stretch reads MNGLFLFCVATTAALAYG. Positions 68–183 constitute an I-type lysozyme domain; that stretch reads TGIVSQQCLQ…WSHVHAQGCS (116 aa). Cystine bridges form between Cys-75-Cys-151, Cys-80-Cys-86, Cys-91-Cys-100, Cys-113-Cys-133, Cys-123-Cys-129, and Cys-147-Cys-165. Glu-83 acts as the Proton donor in catalysis. The active-site Nucleophile is Asp-94. A substrate-binding site is contributed by 106–112; sequence KEGYWHD. Residues Tyr-137 and 158-160 each bind substrate; that span reads HNG.

In terms of tissue distribution, highest levels of expression detected in the digestive glands. Lower levels in the mantle, labial palps, gills and style-midgut sac, and lowest levels detected in the hemocytes. Not detected in the gonads.

The protein localises to the secreted. It carries out the reaction Hydrolysis of (1-&gt;4)-beta-linkages between N-acetylmuramic acid and N-acetyl-D-glucosamine residues in a peptidoglycan and between N-acetyl-D-glucosamine residues in chitodextrins.. In terms of biological role, has antibacterial activity against the Gram-negative bacterium E.coli. No antibacterial activity detected against the Gram-negative bacterium V.vulnificus. The protein is Lysozyme 3 of Crassostrea virginica (Eastern oyster).